A 165-amino-acid polypeptide reads, in one-letter code: MGVTKKPDLNDPVLRAKLAKGMGHNYYGEPAWPNDLLYIFPVVILGTIACNVGLAVLEPSMIGEPADPFATPLEILPEWYFFPVFQILRTVPNKLLGVLLMVSVPAGLLTVPFLENVNKFQNPFRRPVATTVFLIGTVVALWLGIGATLPIDKSLTLGLFQIDSI.

3 consecutive transmembrane segments (helical) span residues 36–56 (LLYIFPVVILGTIACNVGLAV), 95–115 (LLGVLLMVSVPAGLLTVPFLE), and 131–151 (TVFLIGTVVALWLGIGATLPI).

It belongs to the cytochrome b family. PetD subfamily. The 4 large subunits of the cytochrome b6-f complex are cytochrome b6, subunit IV (17 kDa polypeptide, petD), cytochrome f and the Rieske protein, while the 4 small subunits are petG, petL, petM and petN. The complex functions as a dimer.

The protein localises to the plastid. It localises to the chloroplast thylakoid membrane. In terms of biological role, component of the cytochrome b6-f complex, which mediates electron transfer between photosystem II (PSII) and photosystem I (PSI), cyclic electron flow around PSI, and state transitions. The chain is Cytochrome b6-f complex subunit 4 from Populus alba (White poplar).